A 303-amino-acid polypeptide reads, in one-letter code: N-acetyl-D-glucosamine kinase (303 aa).

ATP is bound by residues 4 to 11 (GFDIGGTK) and 133 to 140 (GVGGGLIF). Residues H157, C177, C179, and C184 each contribute to the Zn(2+) site.

The protein belongs to the ROK (NagC/XylR) family. NagK subfamily.

The enzyme catalyses N-acetyl-D-glucosamine + ATP = N-acetyl-D-glucosamine 6-phosphate + ADP + H(+). It functions in the pathway cell wall biogenesis; peptidoglycan recycling. Catalyzes the phosphorylation of N-acetyl-D-glucosamine (GlcNAc) derived from cell-wall degradation, yielding GlcNAc-6-P. This Escherichia coli O157:H7 protein is N-acetyl-D-glucosamine kinase.